The chain runs to 917 residues: Protein translocase subunit SecA (917 aa).

Residues Gln-87, 105 to 109 (GEGKT), and Asp-516 contribute to the ATP site. The Zn(2+) site is built by Cys-901, Cys-903, Cys-912, and His-913.

The protein belongs to the SecA family. Monomer and homodimer. Part of the essential Sec protein translocation apparatus which comprises SecA, SecYEG and auxiliary proteins SecDF-YajC and YidC. It depends on Zn(2+) as a cofactor.

It is found in the cell inner membrane. Its subcellular location is the cytoplasm. The enzyme catalyses ATP + H2O + cellular proteinSide 1 = ADP + phosphate + cellular proteinSide 2.. In terms of biological role, part of the Sec protein translocase complex. Interacts with the SecYEG preprotein conducting channel. Has a central role in coupling the hydrolysis of ATP to the transfer of proteins into and across the cell membrane, serving both as a receptor for the preprotein-SecB complex and as an ATP-driven molecular motor driving the stepwise translocation of polypeptide chains across the membrane. This Acidovorax ebreus (strain TPSY) (Diaphorobacter sp. (strain TPSY)) protein is Protein translocase subunit SecA.